The chain runs to 825 residues: NT-3 growth factor receptor (825 aa).

An N-terminal signal peptide occupies residues 1–31 (MDVSLCPAKCSFWRIFLLGSVWLDYVGSVLA). Disulfide bonds link Cys32/Cys38 and Cys36/Cys45. Over 32 to 429 (CPANCVCSKT…TVTHKPEEDT (398 aa)) the chain is Extracellular. 3 N-linked (GlcNAc...) asparagine glycosylation sites follow: Asn68, Asn72, and Asn79. LRR repeat units follow at residues 104-125 (GLQK…AFAK) and 128-149 (HLRY…LFQT). N-linked (GlcNAc...) asparagine glycosylation is found at Asn133 and Asn163. The LRRCT domain maps to 160–209 (NFFNCSCDIRWMQLWQEQGEARLNSQNLYCINADGSQLPLFRMNISQCDL). 2 disulfide bridges follow: Cys164/Cys189 and Cys166/Cys207. Residues Asn203, Asn218, Asn232, Asn259, Asn267, Asn272, and Asn294 are each glycosylated (N-linked (GlcNAc...) asparagine). Ig-like C2-type domains are found at residues 210-300 (PEIS…VALT) and 309-382 (SLEE…IAKN). Cys231 and Cys284 are disulfide-bonded. The cysteines at positions 320 and 362 are disulfide-linked. Asn375 and Asn388 each carry an N-linked (GlcNAc...) asparagine glycan. Residues 430-453 (FGVSIAVGLAAFACVLLVVLFIMI) traverse the membrane as a helical segment. The Cytoplasmic portion of the chain corresponds to 454–825 (NKYGRRSKFG…ATPIYLDILG (372 aa)). At Ser493 the chain carries Phosphoserine. Tyr516 is modified (phosphotyrosine; by autocatalysis). Positions 538–825 (IVLKRELGEG…ATPIYLDILG (288 aa)) constitute a Protein kinase domain. Residues 544–552 (LGEGAFGKV) and Lys572 contribute to the ATP site. Residue Asp679 is the Proton acceptor of the active site. Phosphotyrosine; by autocatalysis is present on residues Tyr705, Tyr709, and Tyr710.

This sequence belongs to the protein kinase superfamily. Tyr protein kinase family. Insulin receptor subfamily. Exists in a dynamic equilibrium between monomeric (low affinity) and dimeric (high affinity) structures. Binds SH2B2. Interacts with SQSTM1 and KIDINS220. Interacts with PTPRS. Interacts with MAPK8IP3/JIP3. Ligand-mediated auto-phosphorylation.

It is found in the membrane. The enzyme catalyses L-tyrosyl-[protein] + ATP = O-phospho-L-tyrosyl-[protein] + ADP + H(+). In terms of biological role, receptor tyrosine kinase involved in nervous system and probably heart development. Upon binding of its ligand NTF3/neurotrophin-3, NTRK3 autophosphorylates and activates different signaling pathways, including the phosphatidylinositol 3-kinase/AKT and the MAPK pathways, that control cell survival and differentiation. In Saimiri boliviensis boliviensis (Bolivian squirrel monkey), this protein is NT-3 growth factor receptor (NTRK3).